The sequence spans 204 residues: Golgi to ER traffic protein 1 (204 aa).

Over 1–11 the chain is Lumenal; it reads MLTLDIDPYTI. Residues 12–31 form a helical membrane-spanning segment; the sequence is LVTSFLILAIQKLVTVIGKQ. The Cytoplasmic segment spans residues 32 to 116; the sequence is KIQLYIWQIY…RIDSITKLAI (85 aa). The stretch at 78–113 forms a coiled coil; that stretch reads AKWTKINRALDKLKLEVQELNETIAGEKTRIDSITK. Residues 117 to 137 form a helical membrane-spanning segment; that stretch reads TLILTLPIWFLRIFCRKTALL. Residues 138 to 161 are Lumenal-facing; the sequence is YIRKGILPAYLEWWLALPFFKSGT. Residues 162–178 form a helical membrane-spanning segment; that stretch reads IGLTCWMFVVNSVLSNL. The Cytoplasmic segment spans residues 179-204; the sequence is IFLISFPFTQKVERPIKPKNEQKTES.

This sequence belongs to the WRB/GET1 family. Component of the Golgi to ER traffic (GET) complex, which is composed of GET1, GET2 and GET3. Within the complex, GET1 and GET2 form a heterotetramer which is stabilized by phosphatidylinositol binding and which binds to the GET3 homodimer.

Its subcellular location is the endoplasmic reticulum membrane. The protein resides in the golgi apparatus membrane. Required for the post-translational delivery of tail-anchored (TA) proteins to the endoplasmic reticulum. Together with GET2, acts as a membrane receptor for soluble GET3, which recognizes and selectively binds the transmembrane domain of TA proteins in the cytosol. The GET complex cooperates with the HDEL receptor ERD2 to mediate the ATP-dependent retrieval of resident ER proteins that contain a C-terminal H-D-E-L retention signal from the Golgi to the ER. This chain is Golgi to ER traffic protein 1, found in Lodderomyces elongisporus (strain ATCC 11503 / CBS 2605 / JCM 1781 / NBRC 1676 / NRRL YB-4239) (Yeast).